Here is a 188-residue protein sequence, read N- to C-terminus: UPF0398 protein SE_1135 (188 aa).

Belongs to the UPF0398 family.

This chain is UPF0398 protein SE_1135, found in Staphylococcus epidermidis (strain ATCC 12228 / FDA PCI 1200).